A 158-amino-acid chain; its full sequence is Probable cyclic pyranopterin monophosphate synthase (158 aa).

Substrate is bound by residues 75-77 and 111-112; these read MCH and ME. Aspartate 126 is a catalytic residue.

It belongs to the MoaC family. In terms of assembly, homohexamer; trimer of dimers.

It catalyses the reaction (8S)-3',8-cyclo-7,8-dihydroguanosine 5'-triphosphate = cyclic pyranopterin phosphate + diphosphate. Its pathway is cofactor biosynthesis; molybdopterin biosynthesis. Catalyzes the conversion of (8S)-3',8-cyclo-7,8-dihydroguanosine 5'-triphosphate to cyclic pyranopterin monophosphate (cPMP). This chain is Probable cyclic pyranopterin monophosphate synthase, found in Methanocorpusculum labreanum (strain ATCC 43576 / DSM 4855 / Z).